We begin with the raw amino-acid sequence, 619 residues long: Trihelix transcription factor GTL2 (619 aa).

Disordered regions lie at residues 11-41 and 62-100; these read HRFI…VSFS and HHHH…HHHH. Residues 16-27 are compositionally biased toward pro residues; that stretch reads SPPPPPPLPPHQ. The 53-residue stretch at 102 to 154 folds into the Myb-like 1 domain; it reads PWCSDEVLALLRFRSTVENWFPEFTWEHTSRKLAEVGFKRSPQECKEKFEEEE. A coiled-coil region spans residues 307 to 361; the sequence is VRNMIAQQEEMHKKLLEDMVKKEEEKIAREEAWKKQEIERVNKEVEIRAQEQAMA. 2 disordered regions span residues 382 to 414 and 434 to 458; these read VVQN…SSLL and STKT…DLGK. Over residues 384–396 the composition is skewed to polar residues; the sequence is QNPTSPSQDSSSL. Positions 435–444 are enriched in low complexity; sequence TKTLKPKNQN. Over residues 448–458 the composition is skewed to basic and acidic residues; sequence PKSDDKSDLGK. One can recognise a Myb-like 2 domain in the interval 459 to 526; sequence RWPKDEVLAL…RCKEKWENIN (68 aa). Positions 503 to 510 match the Nuclear localization signal motif; that stretch reads SKKMLEIG. The disordered stretch occupies residues 557 to 619; it reads SQPPTGTTAT…VQFSGFDLEF (63 aa). Residues 561 to 574 show a composition bias toward low complexity; sequence TGTTATTATTATSA. The span at 575-585 shows a compositional bias: basic and acidic residues; that stretch reads RDLDTRPEENR.

Its subcellular location is the nucleus. In terms of biological role, probable transcription factor that binds specific DNA sequence. This chain is Trihelix transcription factor GTL2, found in Arabidopsis thaliana (Mouse-ear cress).